The sequence spans 152 residues: Small ribosomal subunit protein uS15 (152 aa).

The segment at 1 to 20 (MNKRRANGSSHSTRPVRTGS) is disordered.

Belongs to the universal ribosomal protein uS15 family. As to quaternary structure, part of the 30S ribosomal subunit.

This is Small ribosomal subunit protein uS15 from Metallosphaera sedula (strain ATCC 51363 / DSM 5348 / JCM 9185 / NBRC 15509 / TH2).